A 159-amino-acid polypeptide reads, in one-letter code: Peptide methionine sulfoxide reductase MsrB (159 aa).

The MsrB domain occupies 22 to 144 (RERLEANLTA…NSVSLQFVKA (123 aa)). Zn(2+) is bound by residues C61, C64, C110, and C113. Catalysis depends on C133, which acts as the Nucleophile.

The protein belongs to the MsrB Met sulfoxide reductase family. Zn(2+) is required as a cofactor.

It catalyses the reaction L-methionyl-[protein] + [thioredoxin]-disulfide + H2O = L-methionyl-(R)-S-oxide-[protein] + [thioredoxin]-dithiol. The polypeptide is Peptide methionine sulfoxide reductase MsrB (Caulobacter vibrioides (strain ATCC 19089 / CIP 103742 / CB 15) (Caulobacter crescentus)).